Consider the following 282-residue polypeptide: Homeobox protein vex1 (282 aa).

Residues 129 to 188 (ASRARTKFTAEQLEELEKSFKENRYIGSSEKRRLSKVLKLSENQIKTWFQNRRMKFKRQT) constitute a DNA-binding region (homeobox).

It is found in the nucleus. Functionally, transcriptional repressor. Acts in a ventral signaling pathway downstream of bmp4 to antagonize the Spemann organizer and ventrally pattern the embryonic mesoderm. Represses transcription of the dorsal genes gsc and otx2. This chain is Homeobox protein vex1, found in Xenopus tropicalis (Western clawed frog).